The following is a 463-amino-acid chain: Bifunctional protein HldE (463 aa).

Positions 1 to 315 are ribokinase; that stretch reads MRKILVIGDL…LILNQTHPKI (315 aa). 191 to 194 contacts ATP; the sequence is NRFE. Asp-260 is a catalytic residue. The cytidylyltransferase stretch occupies residues 334 to 463; that stretch reads FTNGCFDILH…IEKIKRAYND (130 aa).

It in the N-terminal section; belongs to the carbohydrate kinase PfkB family. In the C-terminal section; belongs to the cytidylyltransferase family. As to quaternary structure, homodimer.

It catalyses the reaction D-glycero-beta-D-manno-heptose 7-phosphate + ATP = D-glycero-beta-D-manno-heptose 1,7-bisphosphate + ADP + H(+). It carries out the reaction D-glycero-beta-D-manno-heptose 1-phosphate + ATP + H(+) = ADP-D-glycero-beta-D-manno-heptose + diphosphate. The protein operates within nucleotide-sugar biosynthesis; ADP-L-glycero-beta-D-manno-heptose biosynthesis; ADP-L-glycero-beta-D-manno-heptose from D-glycero-beta-D-manno-heptose 7-phosphate: step 1/4. Its pathway is nucleotide-sugar biosynthesis; ADP-L-glycero-beta-D-manno-heptose biosynthesis; ADP-L-glycero-beta-D-manno-heptose from D-glycero-beta-D-manno-heptose 7-phosphate: step 3/4. Its function is as follows. Catalyzes the phosphorylation of D-glycero-D-manno-heptose 7-phosphate at the C-1 position to selectively form D-glycero-beta-D-manno-heptose-1,7-bisphosphate. Functionally, catalyzes the ADP transfer from ATP to D-glycero-beta-D-manno-heptose 1-phosphate, yielding ADP-D-glycero-beta-D-manno-heptose. The chain is Bifunctional protein HldE from Helicobacter acinonychis (strain Sheeba).